Reading from the N-terminus, the 255-residue chain is Transmembrane protein 81 (255 aa).

The signal sequence occupies residues 1 to 30; the sequence is MKVLATSFVLGSLGLAFYLPLVVTTPKTLA. Residues 31–226 are Extracellular-facing; it reads IPEKLQEAVG…HPKWKKKVAS (196 aa). Asn45 carries N-linked (GlcNAc...) asparagine glycosylation. The 89-residue stretch at 83 to 171 folds into the Ig-like domain; the sequence is TNWICGMLHF…VQLVKNLRLV (89 aa). Cys104 and Cys160 are joined by a disulfide. The chain crosses the membrane as a helical span at residues 227–247; the sequence is ALGIGIAIGVVGGVLVRIVLC. Topologically, residues 248–255 are cytoplasmic; that stretch reads ALRGGLQQ.

In terms of assembly, forms a complex with IZUMO1 and SPACA6 on spermatocyte cell membrane required for fertilization. As to expression, highly expressed in sperm (at protein level).

The protein resides in the cell membrane. Functionally, essential fertilization factor required for male fertility. Part of a conserved trimeric sperm complex with the essential fertilization factors IZUMO1 and SPACA6 which bridges sperm and oocyte membranes during fertilization by binding to IZUMO1R/JUNO on the oocyte. The protein is Transmembrane protein 81 of Homo sapiens (Human).